A 140-amino-acid chain; its full sequence is Large ribosomal subunit protein uL16 (140 aa).

The protein belongs to the universal ribosomal protein uL16 family. Part of the 50S ribosomal subunit.

Binds 23S rRNA and is also seen to make contacts with the A and possibly P site tRNAs. This Cytophaga hutchinsonii (strain ATCC 33406 / DSM 1761 / CIP 103989 / NBRC 15051 / NCIMB 9469 / D465) protein is Large ribosomal subunit protein uL16.